We begin with the raw amino-acid sequence, 613 residues long: tRNA 5-methylaminomethyl-2-thiouridine biosynthesis bifunctional protein MnmC (613 aa).

The interval 1 to 225 (MKKAKLIFKD…KREMIKAYLE (225 aa)) is tRNA (mnm(5)s(2)U34)-methyltransferase. An FAD-dependent cmnm(5)s(2)U34 oxidoreductase region spans residues 252–613 (IGAGISSAVL…FLIRKLKKGL (362 aa)).

This sequence in the N-terminal section; belongs to the methyltransferase superfamily. tRNA (mnm(5)s(2)U34)-methyltransferase family. The protein in the C-terminal section; belongs to the DAO family. FAD serves as cofactor.

It localises to the cytoplasm. The catalysed reaction is 5-aminomethyl-2-thiouridine(34) in tRNA + S-adenosyl-L-methionine = 5-methylaminomethyl-2-thiouridine(34) in tRNA + S-adenosyl-L-homocysteine + H(+). Catalyzes the last two steps in the biosynthesis of 5-methylaminomethyl-2-thiouridine (mnm(5)s(2)U) at the wobble position (U34) in tRNA. Catalyzes the FAD-dependent demodification of cmnm(5)s(2)U34 to nm(5)s(2)U34, followed by the transfer of a methyl group from S-adenosyl-L-methionine to nm(5)s(2)U34, to form mnm(5)s(2)U34. The protein is tRNA 5-methylaminomethyl-2-thiouridine biosynthesis bifunctional protein MnmC of Campylobacter jejuni subsp. jejuni serotype O:2 (strain ATCC 700819 / NCTC 11168).